A 931-amino-acid polypeptide reads, in one-letter code: Protein unc-45 homolog B (931 aa).

3 TPR repeats span residues 6 to 39 (AVQL…TKDK), 43 to 76 (ATLY…NSSD), and 77 to 110 (IKAL…EPRN). ARM repeat units lie at residues 169–208 (EAGA…GMCS), 211–250 (QARA…AIID), and 751–790 (DKLR…NMVL).

As to quaternary structure, interacts with HSP90 in an ATP-independent manner. Interacts with UBE4B; the interaction may target UNC45B for proteasomal degradation. As to expression, expressed in eye lens tissues. Expressed in muscle (at protein level).

It is found in the cytoplasm. It localises to the myofibril. The protein resides in the sarcomere. The protein localises to the z line. Its subcellular location is the a band. It is found in the perinuclear region. It localises to the cytosol. Acts as a co-chaperone for HSP90 and is required for proper folding of the myosin motor domain. Plays a role in sarcomere formation during muscle cell development. Is necessary for normal early lens development. This is Protein unc-45 homolog B from Homo sapiens (Human).